We begin with the raw amino-acid sequence, 187 residues long: Cell division protein SepF (187 aa).

The interval 21–97 is disordered; it reads EVEVPDKQQQ…ATPNNASQES (77 aa). Composition is skewed to polar residues over residues 38–63 and 70–97; these read EQSQ…YTTT and RMSN…SQES.

Belongs to the SepF family. Homodimer. Interacts with FtsZ.

The protein localises to the cytoplasm. Functionally, cell division protein that is part of the divisome complex and is recruited early to the Z-ring. Probably stimulates Z-ring formation, perhaps through the cross-linking of FtsZ protofilaments. Its function overlaps with FtsA. This chain is Cell division protein SepF, found in Staphylococcus aureus (strain MRSA252).